Consider the following 353-residue polypeptide: D-alanine--D-alanine ligase (353 aa).

Positions 141 to 349 (KAAFAAAGLP…LEELVSQLVI (209 aa)) constitute an ATP-grasp domain. 176–231 (EAKLKYPCFVKPANLGSSVGISKAQNRNELLIGLDKAASLDRRIVVEQGVSARELE) contacts ATP. 3 residues coordinate Mg(2+): D302, E316, and N318.

It belongs to the D-alanine--D-alanine ligase family. Mg(2+) serves as cofactor. The cofactor is Mn(2+).

It localises to the cytoplasm. It catalyses the reaction 2 D-alanine + ATP = D-alanyl-D-alanine + ADP + phosphate + H(+). It functions in the pathway cell wall biogenesis; peptidoglycan biosynthesis. Cell wall formation. This Prochlorococcus marinus (strain MIT 9303) protein is D-alanine--D-alanine ligase.